We begin with the raw amino-acid sequence, 122 residues long: Putative TLX1 neighbor protein (122 aa).

The interval 21 to 122 (SLLSQEAMGP…LGGGRGQRGQ (102 aa)) is disordered. The segment covering 113-122 (LGGGRGQRGQ) has biased composition (gly residues).

The sequence is that of Putative TLX1 neighbor protein (TLX1NB) from Homo sapiens (Human).